A 200-amino-acid polypeptide reads, in one-letter code: CASP-like protein 1U2 (200 aa).

Residues 1–33 (MAEPVIVVPRKGVYSDDSYHHHHRHHSFHSCTN) are Cytoplasmic-facing. The chain crosses the membrane as a helical span at residues 34–54 (FLLRTLTAGATAAAVVVMLIS). Topologically, residues 55-77 (TQTSGTIYGYFRGRWRDYPAYKW) are extracellular. The helical transmembrane segment at 78 to 98 (LIIANAVVFVYSVMAAIVACF) threads the bilayer. Topologically, residues 99–120 (SVIARRGPLSYSPSAWLTLLVD) are cytoplasmic. Residues 121-141 (FLAASALISAASAALAVALLA) form a helical membrane-spanning segment. At 142–168 (RNGQDLQGTHYWPTVCNYVSKFCDYTQ) the chain is on the extracellular side. The chain crosses the membrane as a helical span at residues 169–189 (GAIIASFVGFGLLFLSTLLAA). Over 190 to 200 (SALYHLSHRRH) the chain is Cytoplasmic.

It belongs to the Casparian strip membrane proteins (CASP) family. In terms of assembly, homodimer and heterodimers.

It localises to the cell membrane. This Physcomitrium patens (Spreading-leaved earth moss) protein is CASP-like protein 1U2.